We begin with the raw amino-acid sequence, 172 residues long: Adenine phosphoribosyltransferase (172 aa).

This sequence belongs to the purine/pyrimidine phosphoribosyltransferase family. Homodimer.

The protein localises to the cytoplasm. The catalysed reaction is AMP + diphosphate = 5-phospho-alpha-D-ribose 1-diphosphate + adenine. The protein operates within purine metabolism; AMP biosynthesis via salvage pathway; AMP from adenine: step 1/1. Functionally, catalyzes a salvage reaction resulting in the formation of AMP, that is energically less costly than de novo synthesis. This is Adenine phosphoribosyltransferase from Streptococcus uberis (strain ATCC BAA-854 / 0140J).